Reading from the N-terminus, the 379-residue chain is Cytochrome b (379 aa).

Transmembrane regions (helical) follow at residues 33–53, 77–98, 113–133, and 178–198; these read FGSL…FLAM, WLIR…FIHV, WNIG…GYVL, and FFAF…VHLL. Heme b is bound by residues H83 and H97. 2 residues coordinate heme b: H182 and H196. H201 is a binding site for a ubiquinone. A run of 4 helical transmembrane segments spans residues 226-246, 288-308, 320-340, and 347-367; these read TKDL…ALFF, LGGV…PLLN, VTQV…WIGG, and FTMI…ILIP.

The protein belongs to the cytochrome b family. The cytochrome bc1 complex contains 11 subunits: 3 respiratory subunits (MT-CYB, CYC1 and UQCRFS1), 2 core proteins (UQCRC1 and UQCRC2) and 6 low-molecular weight proteins (UQCRH/QCR6, UQCRB/QCR7, UQCRQ/QCR8, UQCR10/QCR9, UQCR11/QCR10 and a cleavage product of UQCRFS1). This cytochrome bc1 complex then forms a dimer. Heme b serves as cofactor.

It localises to the mitochondrion inner membrane. In terms of biological role, component of the ubiquinol-cytochrome c reductase complex (complex III or cytochrome b-c1 complex) that is part of the mitochondrial respiratory chain. The b-c1 complex mediates electron transfer from ubiquinol to cytochrome c. Contributes to the generation of a proton gradient across the mitochondrial membrane that is then used for ATP synthesis. In Akodon lutescens puer (Altiplano grass mouse), this protein is Cytochrome b (MT-CYB).